Consider the following 368-residue polypeptide: Phospho-N-acetylmuramoyl-pentapeptide-transferase (368 aa).

10 helical membrane passes run 32–52, 79–99, 102–122, 140–160, 176–196, 207–227, 247–267, 271–291, 296–316, and 345–365; these read TGGAMVTGALFVFLFGPWIID, TPTMGGLMILSGLVVSTVLWA, LNPYVWIVLAVTLGFGFIGFY, TRLLLELLIALAACYALIRLG, VVVDLGWFFLAFGAFIIVGAG, GLAIVPVMIAAASFGMIAYLA, LAVLCGAVLGAGLGFLWFNAP, IFMGDTGSLALGGMLGSIAVA, IVLAVIGGLFVLEAVSVIVQV, and QIVIRFWIISVMLALAGLSTL.

It belongs to the glycosyltransferase 4 family. MraY subfamily. It depends on Mg(2+) as a cofactor.

The protein localises to the cell inner membrane. The catalysed reaction is UDP-N-acetyl-alpha-D-muramoyl-L-alanyl-gamma-D-glutamyl-meso-2,6-diaminopimeloyl-D-alanyl-D-alanine + di-trans,octa-cis-undecaprenyl phosphate = di-trans,octa-cis-undecaprenyl diphospho-N-acetyl-alpha-D-muramoyl-L-alanyl-D-glutamyl-meso-2,6-diaminopimeloyl-D-alanyl-D-alanine + UMP. Its pathway is cell wall biogenesis; peptidoglycan biosynthesis. Catalyzes the initial step of the lipid cycle reactions in the biosynthesis of the cell wall peptidoglycan: transfers peptidoglycan precursor phospho-MurNAc-pentapeptide from UDP-MurNAc-pentapeptide onto the lipid carrier undecaprenyl phosphate, yielding undecaprenyl-pyrophosphoryl-MurNAc-pentapeptide, known as lipid I. This is Phospho-N-acetylmuramoyl-pentapeptide-transferase from Nitrobacter hamburgensis (strain DSM 10229 / NCIMB 13809 / X14).